The following is a 293-amino-acid chain: Large ribosomal subunit protein uL4 (293 aa).

2 stretches are compositionally biased toward basic and acidic residues: residues 1-14 (MAEE…EKTP) and 33-55 (KTTE…ESTK). 2 disordered regions span residues 1–72 (MAEE…IKSE) and 130–166 (QRQG…STRS).

Belongs to the universal ribosomal protein uL4 family. In terms of assembly, part of the 50S ribosomal subunit.

In terms of biological role, one of the primary rRNA binding proteins, this protein initially binds near the 5'-end of the 23S rRNA. It is important during the early stages of 50S assembly. It makes multiple contacts with different domains of the 23S rRNA in the assembled 50S subunit and ribosome. Functionally, forms part of the polypeptide exit tunnel. This is Large ribosomal subunit protein uL4 from Mycoplasma mobile (strain ATCC 43663 / 163K / NCTC 11711) (Mesomycoplasma mobile).